The sequence spans 214 residues: Dephospho-CoA kinase (214 aa).

One can recognise a DPCK domain in the interval 4–204 (IVGLTGGIGS…QRYLQLAQQK (201 aa)). 12-17 (GSGKST) serves as a coordination point for ATP.

The protein belongs to the CoaE family.

It localises to the cytoplasm. The enzyme catalyses 3'-dephospho-CoA + ATP = ADP + CoA + H(+). It participates in cofactor biosynthesis; coenzyme A biosynthesis; CoA from (R)-pantothenate: step 5/5. Catalyzes the phosphorylation of the 3'-hydroxyl group of dephosphocoenzyme A to form coenzyme A. In Mannheimia succiniciproducens (strain KCTC 0769BP / MBEL55E), this protein is Dephospho-CoA kinase.